Consider the following 166-residue polypeptide: Thioredoxin, mitochondrial (166 aa).

Residues 1 to 59 (MAQRLLLGRFLTSVISRKPPQGVWASLTSKTLQTPQYNAGGLTVMPSPARTVHTTRVCL) constitute a mitochondrion transit peptide. Residues 61 to 166 (TFNVQDGPDF…LEAFLKKLIG (106 aa)) form the Thioredoxin domain. Residues cysteine 90 and cysteine 93 each act as nucleophile in the active site. Cysteine 90 and cysteine 93 are oxidised to a cystine. At lysine 152 the chain carries N6-acetyllysine; alternate. An N6-succinyllysine; alternate modification is found at lysine 152.

This sequence belongs to the thioredoxin family. As to quaternary structure, monomer.

The protein localises to the mitochondrion. Functionally, important for the control of mitochondrial reactive oxygen species homeostasis, apoptosis regulation and cell viability. Is involved in various redox reactions including the reduction of protein disulfide bonds, through the reversible oxidation of its active center dithiol to a disulfide. The sequence is that of Thioredoxin, mitochondrial (Txn2) from Mus musculus (Mouse).